A 178-amino-acid polypeptide reads, in one-letter code: Large ribosomal subunit protein bL19 (178 aa).

Belongs to the bacterial ribosomal protein bL19 family.

In terms of biological role, this protein is located at the 30S-50S ribosomal subunit interface and may play a role in the structure and function of the aminoacyl-tRNA binding site. This is Large ribosomal subunit protein bL19 from Rhizobium etli (strain ATCC 51251 / DSM 11541 / JCM 21823 / NBRC 15573 / CFN 42).